We begin with the raw amino-acid sequence, 38 residues long: Potassium channel toxin alpha-KTx 3.7 (38 aa).

Disulfide bonds link Cys8/Cys28, Cys14/Cys33, and Cys18/Cys35.

The protein belongs to the short scorpion toxin superfamily. Potassium channel inhibitor family. Alpha-KTx 03 subfamily. As to expression, expressed by the venom gland.

Its subcellular location is the secreted. Functionally, blocks voltage-gated potassium channels Kv1.1/KCNA1 (IC(50)=0.6 nM), Kv1.2/KCNA2 (IC(50)=5.4 nM), Kv1.3/KCNA3 (IC(50)=0.014 nM) potently, and moderately block intermediate conductance calcium-activated potassium channels KCa3.1/KCNN4 (IC(50)=225 nM). Also shows activity on muscle-type nicotinic acetylcholine receptor (nAChR), since it reversibly and dose-dependently inhibits acetylcholine-induced current through mouse muscle-type nAChR heterologously expressed in Xenopus oocytes (IC(50)=1.6 uM). In Orthochirus scrobiculosus (Central Asian scorpion), this protein is Potassium channel toxin alpha-KTx 3.7.